The sequence spans 383 residues: Protein salvador homolog 1 (383 aa).

S94 and S136 each carry phosphoserine. WW domains lie at 199–232 (LPLP…HPLE) and 234–267 (EGLP…HPCA). Residue T210 is modified to Phosphothreonine. The 48-residue stretch at 321–368 (ILKWELFQLADLDTYQGMLKLLFMKELEQIVKMYEAYRQALLTELENR) folds into the SARAH domain. The stretch at 344-373 (MKELEQIVKMYEAYRQALLTELENRKQRQQ) forms a coiled coil.

Homodimer. Stabilized through interaction with STK3/MST2 or STK4/MST1. Interacts (via SARAH domain) with isoform 1 of NEK2. Interacts with ESR1 only in the presence of STK3/MST2. Interacts with WTIP and AJUBA. Phosphorylated by STK3/MST2 and STK4/MST1. Phosphorylation is not required for SAV1 stability and may increase the number of protein binding sites on the scaffold molecule. Ubiquitously expressed in adult tissues with highest expression in the pancreas, aorta and interventricular septum and lowest expression in skeletal muscle. Expression was higher in fetal than in the adult heart. Expressed in various cell lines.

It localises to the nucleus. The protein resides in the cytoplasm. Functionally, regulator of STK3/MST2 and STK4/MST1 in the Hippo signaling pathway which plays a pivotal role in organ size control and tumor suppression by restricting proliferation and promoting apoptosis. The core of this pathway is composed of a kinase cascade wherein STK3/MST2 and STK4/MST1, in complex with its regulatory protein SAV1, phosphorylates and activates LATS1/2 in complex with its regulatory protein MOB1, which in turn phosphorylates and inactivates YAP1 oncoprotein and WWTR1/TAZ. Phosphorylation of YAP1 by LATS1/2 inhibits its translocation into the nucleus to regulate cellular genes important for cell proliferation, cell death, and cell migration. SAV1 is required for STK3/MST2 and STK4/MST1 activation and promotes cell-cycle exit and terminal differentiation in developing epithelial tissues. Plays a role in centrosome disjunction by regulating the localization of NEK2 to centrosomes, and its ability to phosphorylate CROCC and CEP250. In conjunction with STK3/MST2, activates the transcriptional activity of ESR1 through the modulation of its phosphorylation. In Homo sapiens (Human), this protein is Protein salvador homolog 1.